Here is a 393-residue protein sequence, read N- to C-terminus: Acetylornithine aminotransferase (393 aa).

Residues 105–106 (GA) and phenylalanine 138 each bind pyridoxal 5'-phosphate. Arginine 141 serves as a coordination point for N(2)-acetyl-L-ornithine. 224–227 (DEVQ) is a pyridoxal 5'-phosphate binding site. Residue lysine 253 is modified to N6-(pyridoxal phosphate)lysine. Serine 281 is a binding site for N(2)-acetyl-L-ornithine. Residue threonine 282 participates in pyridoxal 5'-phosphate binding.

Belongs to the class-III pyridoxal-phosphate-dependent aminotransferase family. ArgD subfamily. In terms of assembly, homodimer. It depends on pyridoxal 5'-phosphate as a cofactor.

It is found in the cytoplasm. The enzyme catalyses N(2)-acetyl-L-ornithine + 2-oxoglutarate = N-acetyl-L-glutamate 5-semialdehyde + L-glutamate. Its pathway is amino-acid biosynthesis; L-arginine biosynthesis; N(2)-acetyl-L-ornithine from L-glutamate: step 4/4. This is Acetylornithine aminotransferase from Haemophilus ducreyi (strain 35000HP / ATCC 700724).